The sequence spans 149 residues: Large ribosomal subunit protein bL9 (149 aa).

The protein belongs to the bacterial ribosomal protein bL9 family.

Binds to the 23S rRNA. This Alkaliphilus metalliredigens (strain QYMF) protein is Large ribosomal subunit protein bL9.